Consider the following 179-residue polypeptide: MEYTTKTQIYQKVKKPMLERQRRARMNKCLDNLKTLVAELRGDDGILRMDKAEMLESAVIFMRQQKTPKKVAQEEQSLPLDSFKNGYMNAVNEVSRVMASTPGMSVDLGKSVMTHLGRVYKNLQQFHEAQSAADFIQNSMDCSSMDKAPLSPASSGYHSDCDSPAPSPQPMQQPLWRPW.

The bHLH domain occupies 10–65; sequence YQKVKKPMLERQRRARMNKCLDNLKTLVAELRGDDGILRMDKAEMLESAVIFMRQQ. Residues 83-116 enclose the Orange domain; that stretch reads FKNGYMNAVNEVSRVMASTPGMSVDLGKSVMTHL. The tract at residues 146–179 is disordered; the sequence is DKAPLSPASSGYHSDCDSPAPSPQPMQQPLWRPW. The WRPW motif signature appears at 176-179; the sequence is WRPW.

Homodimer. Heterodimers with dpn. Transcription repression requires formation of a complex with a corepressor protein (Groucho).

Its subcellular location is the nucleus. Its function is as follows. Participates in the control of cell fate choice by uncommitted neuroectodermal cells in the embryo. Transcriptional repressor. Binds DNA on N-box motifs: 5'-CACNAG-3'. Part of the Notch signaling pathway. This Drosophila melanogaster (Fruit fly) protein is Enhancer of split m8 protein.